A 324-amino-acid chain; its full sequence is Interactor of constitutive active ROPs 4 (324 aa).

4 disordered regions span residues 1-74 (MPKP…SGLE), 91-156 (LAKA…ASKE), 175-201 (SLSEENETLKDQLKKTDTEMSCAKAKE), and 289-324 (FVGSPGMADDSDDGSGKRKSSGKKMFGDLWKKKGQK). Residues 13–28 (QRQSPRLRTSLLSTSS) are compositionally biased toward low complexity. 3 stretches are compositionally biased toward basic and acidic residues: residues 29–50 (DPHHLSRPITDRSPKLGLDRRS), 95–106 (EAAKKRAQEELH), and 118–156 (PERDDIPGDGHQETDVFEVLDEKAKESEKTKNDELASKE). A coiled-coil region spans residues 62–266 (SQKKLGSRIS…ADAAAAVLSG (205 aa)). The segment covering 313–324 (MFGDLWKKKGQK) has biased composition (basic and acidic residues).

It belongs to the ICR family. In terms of assembly, interacts with ARAC11 in vitro.

In terms of biological role, acts as a scaffold, mediating interaction of ROPs with different proteins. The sequence is that of Interactor of constitutive active ROPs 4 (ICR4) from Arabidopsis thaliana (Mouse-ear cress).